The primary structure comprises 373 residues: Transaldolase (373 aa).

Catalysis depends on Lys143, which acts as the Schiff-base intermediate with substrate.

This sequence belongs to the transaldolase family. Type 2 subfamily.

The protein localises to the cytoplasm. The catalysed reaction is D-sedoheptulose 7-phosphate + D-glyceraldehyde 3-phosphate = D-erythrose 4-phosphate + beta-D-fructose 6-phosphate. The protein operates within carbohydrate degradation; pentose phosphate pathway; D-glyceraldehyde 3-phosphate and beta-D-fructose 6-phosphate from D-ribose 5-phosphate and D-xylulose 5-phosphate (non-oxidative stage): step 2/3. In terms of biological role, transaldolase is important for the balance of metabolites in the pentose-phosphate pathway. This Mycolicibacterium paratuberculosis (strain ATCC BAA-968 / K-10) (Mycobacterium paratuberculosis) protein is Transaldolase.